Here is a 940-residue protein sequence, read N- to C-terminus: MYTNLPKACLTGIVLTISTHSGPQVVYHYPPVKQPVEARRGRKVDSRNERVRSWQAGRMPSAASGAVDAVGEGVDGLEEESSESELDRSSGLSESEVSTDWADYSMSSSDSESEMREDGGGESSAVGGSSAAEGGEESLAEGADSSIAWPGPSESYNQLLESQSMVGSSANVAAASTKPKSIKSRHSQISANKLFQYLTNTSDADSRRQSVFSKLTGNEDSETIRLTDSVNLLDLESLLEDLEPGLADVDISELLDVEVFQPGRFQDVSKIFNFDAEFVAELCSPPKEMCNTRFELTVDDLCFLGLPIHVDESGRWRKQKVKRQQTNTRSKRSSSGGKPDAGSRTSVGLPHGTQERQPSTDQSGSGAPYLAQSSSESGQLRDPEQSDDVEDLQKAVHMFHVCFIMNPQLVEYNERIDDMYHYIVTRLSLILRYIQDKKGYVVRECAKILKTRDRILKKSLKLKKSHGQALQGRYLYECILKSSSLARALTKCFNSIINNEIVTLDIDNHKVISLQIPIKNEFSSLPDLKINPVLRGSYLTSLLNDSFLKQPVDFAAGSMMPGGDVMHDDNDVLDYALLLLDDTPKIIKDLEFSSFGSDLANVIMINLVKNLKPTVSLRSYLPLVSNLLEANLSLSARAAGSRHAASNAADSHSTPLQHSMIRSIVLHLVYWRYARIILPLSSKNTYIVSPLAPIRGTAADDFENTDMVKQGCKALIYQHQDLFHEKFPTLPTLPSFLSSISTCKPRSFGHLIPSKDHNLLYLSVLAWLIRYGYLTQLLTFVWLRVDRRIKIAVDEDLEREGVRTWNSIVKKEHRQNPHDNVAAPTREPASSAIDETASSSEHGDANISDGQESLDDYLFKESDYTIILEPKTATALEKRWLFKCIENQPTEMQLLFRKVIKYFNGKTPLELVEIKENIPKQELKKLIACLDKYVVELKHW.

The N-terminal stretch at 1–21 (MYTNLPKACLTGIVLTISTHS) is a signal peptide. Residues 37-52 (EARRGRKVDSRNERVR) show a composition bias toward basic and acidic residues. Disordered stretches follow at residues 37 to 155 (EARR…PSES), 317 to 387 (RKQK…EQSD), and 812 to 848 (EHRQ…ANIS). The span at 61 to 72 (SAASGAVDAVGE) shows a compositional bias: low complexity. Positions 75 to 84 (DGLEEESSES) are enriched in acidic residues. Low complexity predominate over residues 123 to 133 (SSAVGGSSAAE). Composition is skewed to polar residues over residues 324 to 336 (QQTN…SSSG) and 355 to 378 (ERQP…SESG).

This sequence belongs to the NPR3 family.

Mediates inactivation of the TORC1 complex in response to amino acid starvation. Required for meiotic nuclear division. This is Nitrogen permease regulator 3 (NPR3) from Eremothecium gossypii (strain ATCC 10895 / CBS 109.51 / FGSC 9923 / NRRL Y-1056) (Yeast).